The primary structure comprises 767 residues: ATPase family gene 2 protein homolog B (767 aa).

Residue M1 is modified to N-acetylmethionine. ATP is bound by residues 241 to 248 (GPPGVGKT) and 507 to 514 (GPPGCAKT).

It belongs to the AAA ATPase family. AFG2 subfamily. In terms of assembly, part of the 55LCC heterohexameric ATPase complex composed at least of AIRIM, AFG2A, AFG2B and CINP. Associates with pre-60S ribosomal particles.

The protein resides in the cytoplasm. Its subcellular location is the cytoskeleton. The protein localises to the spindle. It is found in the nucleus. It carries out the reaction ATP + H2O = ADP + phosphate + H(+). With respect to regulation, in the context of 55LCC heterohexameric ATPase complex, the ATPase activity is stimulated by DNA binding and inhibited in presence of RNA. ATP-dependent chaperone part of the 55LCC heterohexameric ATPase complex which is chromatin-associated and promotes replisome proteostasis to maintain replication fork progression and genome stability. Required for replication fork progression, sister chromatid cohesion, and chromosome stability. The ATPase activity is specifically enhanced by replication fork DNA and is coupled to cysteine protease-dependent cleavage of replisome substrates in response to replication fork damage. Uses ATPase activity to process replisome substrates in S-phase, facilitating their proteolytic turnover from chromatin to ensure DNA replication and mitotic fidelity. Plays an essential role in the cytoplasmic maturation steps of pre-60S ribosomal particles by promoting the release of shuttling protein RSL24D1/RLP24 from the pre-ribosomal particles. In Bos taurus (Bovine), this protein is ATPase family gene 2 protein homolog B (AFG2B).